The following is a 322-amino-acid chain: Malate dehydrogenase (322 aa).

Residues 10 to 15 and aspartate 34 contribute to the NAD(+) site; that span reads GSGQIG. The substrate site is built by arginine 83 and arginine 89. NAD(+) contacts are provided by residues asparagine 96 and 119-121; that span reads ITN. Residues asparagine 121 and arginine 152 each coordinate substrate. Histidine 176 (proton acceptor) is an active-site residue.

This sequence belongs to the LDH/MDH superfamily. MDH type 3 family.

The enzyme catalyses (S)-malate + NAD(+) = oxaloacetate + NADH + H(+). In terms of biological role, catalyzes the reversible oxidation of malate to oxaloacetate. The polypeptide is Malate dehydrogenase (Bradyrhizobium diazoefficiens (strain JCM 10833 / BCRC 13528 / IAM 13628 / NBRC 14792 / USDA 110)).